A 377-amino-acid polypeptide reads, in one-letter code: Alanine racemase, catabolic (377 aa).

Lysine 51 (proton acceptor; specific for D-alanine) is an active-site residue. Lysine 51 bears the N6-(pyridoxal phosphate)lysine mark. Substrate is bound at residue arginine 150. Residue tyrosine 272 is the Proton acceptor; specific for L-alanine of the active site. Residue methionine 320 participates in substrate binding.

Belongs to the alanine racemase family. It depends on pyridoxal 5'-phosphate as a cofactor.

The enzyme catalyses L-alanine = D-alanine. Isomerizes L-alanine to D-alanine which is then oxidized to pyruvate by DadA. The sequence is that of Alanine racemase, catabolic (dadX) from Rhizobium johnstonii (strain DSM 114642 / LMG 32736 / 3841) (Rhizobium leguminosarum bv. viciae).